Reading from the N-terminus, the 475-residue chain is UDP-N-acetylmuramate--L-alanine ligase (475 aa).

125–131 (GTHGKTT) contacts ATP.

The protein belongs to the MurCDEF family.

Its subcellular location is the cytoplasm. The enzyme catalyses UDP-N-acetyl-alpha-D-muramate + L-alanine + ATP = UDP-N-acetyl-alpha-D-muramoyl-L-alanine + ADP + phosphate + H(+). It functions in the pathway cell wall biogenesis; peptidoglycan biosynthesis. Its function is as follows. Cell wall formation. The sequence is that of UDP-N-acetylmuramate--L-alanine ligase from Actinobacillus pleuropneumoniae serotype 7 (strain AP76).